Reading from the N-terminus, the 352-residue chain is Photosystem II protein D1 (352 aa).

Position 2 is an N-acetylthreonine (threonine 2). Residue threonine 2 is modified to Phosphothreonine. A run of 3 helical transmembrane segments spans residues 29 to 46, 118 to 133, and 142 to 156; these read YIGWFGVIMIPTLLTATS, HFLLGVCCYMGREWEL, and WIAVAYSAPVAAATA. Histidine 118 serves as a coordination point for chlorophyll a. Tyrosine 126 contacts pheophytin a. [CaMn4O5] cluster-binding residues include aspartate 170 and glutamate 189. The helical transmembrane segment at 197-218 threads the bilayer; it reads FHMLGVAGVFGGSLFSAMHGSL. Residue histidine 198 participates in chlorophyll a binding. A quinone is bound by residues histidine 215 and 264–265; that span reads SF. Histidine 215 is a binding site for Fe cation. Histidine 272 contributes to the Fe cation binding site. Residues 274–288 form a helical membrane-spanning segment; that stretch reads FLAAWPVVGIWFTAL. Residues histidine 332, glutamate 333, aspartate 342, and alanine 344 each contribute to the [CaMn4O5] cluster site. The propeptide occupies 345–352; the sequence is SVEAPVVG.

The protein belongs to the reaction center PufL/M/PsbA/D family. As to quaternary structure, PSII is composed of 1 copy each of membrane proteins PsbA, PsbB, PsbC, PsbD, PsbE, PsbF, PsbH, PsbI, PsbJ, PsbK, PsbL, PsbM, PsbT, PsbX, PsbY, PsbZ, Psb30/Ycf12, at least 3 peripheral proteins of the oxygen-evolving complex and a large number of cofactors. It forms dimeric complexes. It depends on The D1/D2 heterodimer binds P680, chlorophylls that are the primary electron donor of PSII, and subsequent electron acceptors. It shares a non-heme iron and each subunit binds pheophytin, quinone, additional chlorophylls, carotenoids and lipids. D1 provides most of the ligands for the Mn4-Ca-O5 cluster of the oxygen-evolving complex (OEC). There is also a Cl(-1) ion associated with D1 and D2, which is required for oxygen evolution. The PSII complex binds additional chlorophylls, carotenoids and specific lipids. as a cofactor. Post-translationally, tyr-161 forms a radical intermediate that is referred to as redox-active TyrZ, YZ or Y-Z. In terms of processing, C-terminally processed by CTPA; processing is essential to allow assembly of the oxygen-evolving complex and thus photosynthetic growth.

Its subcellular location is the plastid. It localises to the chloroplast thylakoid membrane. It catalyses the reaction 2 a plastoquinone + 4 hnu + 2 H2O = 2 a plastoquinol + O2. In terms of biological role, photosystem II (PSII) is a light-driven water:plastoquinone oxidoreductase that uses light energy to abstract electrons from H(2)O, generating O(2) and a proton gradient subsequently used for ATP formation. It consists of a core antenna complex that captures photons, and an electron transfer chain that converts photonic excitation into a charge separation. The D1/D2 (PsbA/PsbD) reaction center heterodimer binds P680, the primary electron donor of PSII as well as several subsequent electron acceptors. The chain is Photosystem II protein D1 from Zygnema circumcarinatum (Green alga).